A 208-amino-acid chain; its full sequence is Protein-L-isoaspartate O-methyltransferase (208 aa).

Ser59 is a catalytic residue.

This sequence belongs to the methyltransferase superfamily. L-isoaspartyl/D-aspartyl protein methyltransferase family.

It localises to the cytoplasm. The enzyme catalyses [protein]-L-isoaspartate + S-adenosyl-L-methionine = [protein]-L-isoaspartate alpha-methyl ester + S-adenosyl-L-homocysteine. Its function is as follows. Catalyzes the methyl esterification of L-isoaspartyl residues in peptides and proteins that result from spontaneous decomposition of normal L-aspartyl and L-asparaginyl residues. It plays a role in the repair and/or degradation of damaged proteins. The polypeptide is Protein-L-isoaspartate O-methyltransferase (Klebsiella pneumoniae subsp. pneumoniae (strain ATCC 700721 / MGH 78578)).